A 900-amino-acid polypeptide reads, in one-letter code: MKKRLLVSFLVLSIIVGLLSFQSLGNYNSGLKIGAWVGTQPSESAIKSFQELQGRKLDIVHQFINWSTDFSWVRPYADAVYNNGSILMITWEPWEYNTVDIKNGKADAYITRMAQDMKAYGKEIWLRPLHEANGDWYPWAIGYSSRVNTNETYIAAFRHIVDIFRANGATNVKWVFNVNCDNVGNGTSYLGHYPGDNYVDYTSIDGYNWGTTQSWGSQWQSFDQVFSRAYQALASINKPIIIAEFASAEIGGNKARWITEAYNSIRTSYNKVIAAVWFHENKETDWRINSSPEALAAYREAIGAGSSNPTPTPTWTSTPPSSSPKAVDPFEMVRKMGMGTNLGNTLEAPYEGSWSKSAMEYYFDDFKAAGYKNVRIPVRWDNHTMRTYPYTIDKAFLDRVEQVVDWSLSRGFVTIINSHHDDWIKEDYNGNIERFEKIWEQIAERFKNKSENLLFEIMNEPFGNITDEQIDDMNSRILKIIRKTNPTRIVIIGGGYWNSYNTLVNIKIPDDPYLIGTFHYYDPYEFTHKWRGTWGTQEDMDTVVRVFDFVKSWSDRNNIPVYFGEFAVMAYADRTSRVKWYDFISDAALERGFACSVWDNGVFGSLDNDMAIYNRDTRTFDTEILNALFNPGTYPSYSPKPSPTPRPTKPPVTPAVGEKMLDDFEGVLNWGSYSGEGAKVSTKIVSGKTGNGMEVSYTGTTDGYWGTVYSLPDGDWSKWLKISFDIKSVDGSANEIRFMIAEKSINGVGDGEHWVYSITPDSSWKTIEIPFSSFRRRLDYQPPGQDMSGTLDLDNIDSIHFMYANNKSGKFVVDNIKLIGATSDPTPSIKHGDLNFDNAVNSTDLLMLKRYILKSLELGTSEQEEKFKKAADLNRDNKVDSTDLTILKRYLLKAISEIPI.

Positions 1 to 44 (MKKRLLVSFLVLSIIVGLLSFQSLGNYNSGLKIGAWVGTQPSES) are cleaved as a signal peptide. One can recognise a GH26 domain in the interval 45 to 298 (AIKSFQELQG…NSSPEALAAY (254 aa)). The Proton donor role is filled by Glu131. Glu244 acts as the Nucleophile in catalysis. The interval 300–630 (EAIGAGSSNP…DTEILNALFN (331 aa)) is catalytic. The tract at residues 303 to 326 (GAGSSNPTPTPTWTSTPPSSSPKA) is disordered. Residues 306 to 324 (SSNPTPTPTWTSTPPSSSP) show a composition bias toward low complexity. Glu460 acts as the Proton donor in catalysis. The Nucleophile role is filled by Glu565. Residues 655–900 (AVGEKMLDDF…LLKAISEIPI (246 aa)) form the CBM11 domain. The region spanning 827–900 (PSIKHGDLNF…LLKAISEIPI (74 aa)) is the Dockerin domain.

In the N-terminal section; belongs to the glycosyl hydrolase 5 (cellulase A) family. The protein in the C-terminal section; belongs to the glycosyl hydrolase 26 family.

The catalysed reaction is Endohydrolysis of (1-&gt;4)-beta-D-glucosidic linkages in cellulose, lichenin and cereal beta-D-glucans.. In terms of biological role, this enzyme catalyzes the endohydrolysis of 1,4-beta-glucosidic linkages in cellulose, lichenin and cereal beta-D-glucans. The sequence is that of Endoglucanase H (celH) from Acetivibrio thermocellus (strain ATCC 27405 / DSM 1237 / JCM 9322 / NBRC 103400 / NCIMB 10682 / NRRL B-4536 / VPI 7372) (Clostridium thermocellum).